Here is a 331-residue protein sequence, read N- to C-terminus: Inositol 2-dehydrogenase (331 aa).

This sequence belongs to the Gfo/Idh/MocA family. In terms of assembly, homotetramer.

It catalyses the reaction myo-inositol + NAD(+) = scyllo-inosose + NADH + H(+). Functionally, involved in the oxidation of myo-inositol (MI) to 2-keto-myo-inositol (2KMI or 2-inosose). This Renibacterium salmoninarum (strain ATCC 33209 / DSM 20767 / JCM 11484 / NBRC 15589 / NCIMB 2235) protein is Inositol 2-dehydrogenase.